A 124-amino-acid polypeptide reads, in one-letter code: Small ribosomal subunit protein uS12 (124 aa).

Position 89 is a 3-methylthioaspartic acid (Asp89). A disordered region spans residues 105–124 (QGVKNRKQARSRYGAKKEKS). Residues 108 to 118 (KNRKQARSRYG) are compositionally biased toward basic residues.

Belongs to the universal ribosomal protein uS12 family. In terms of assembly, part of the 30S ribosomal subunit. Contacts proteins S8 and S17. May interact with IF1 in the 30S initiation complex.

With S4 and S5 plays an important role in translational accuracy. In terms of biological role, interacts with and stabilizes bases of the 16S rRNA that are involved in tRNA selection in the A site and with the mRNA backbone. Located at the interface of the 30S and 50S subunits, it traverses the body of the 30S subunit contacting proteins on the other side and probably holding the rRNA structure together. The combined cluster of proteins S8, S12 and S17 appears to hold together the shoulder and platform of the 30S subunit. The chain is Small ribosomal subunit protein uS12 from Mycobacterium sp. (strain JLS).